An 89-amino-acid chain; its full sequence is uncharacterized protein (89 aa).

Residues T31–V89 form a disordered region. Residues E36–R58 show a composition bias toward basic and acidic residues. The segment covering N59–V69 has biased composition (pro residues).

This is an uncharacterized protein from Dictyostelium discoideum (Social amoeba).